Here is a 379-residue protein sequence, read N- to C-terminus: Glutamate 5-kinase (379 aa).

Position 14 (lysine 14) interacts with ATP. Serine 54, aspartate 141, and asparagine 153 together coordinate substrate. ATP-binding positions include 173 to 174 (TD) and 215 to 221 (TGGMATK). In terms of domain architecture, PUA spans 280–358 (KGRLLLDIGA…DEIEPLLGYD (79 aa)).

It belongs to the glutamate 5-kinase family.

It localises to the cytoplasm. The catalysed reaction is L-glutamate + ATP = L-glutamyl 5-phosphate + ADP. The protein operates within amino-acid biosynthesis; L-proline biosynthesis; L-glutamate 5-semialdehyde from L-glutamate: step 1/2. Its function is as follows. Catalyzes the transfer of a phosphate group to glutamate to form L-glutamate 5-phosphate. This chain is Glutamate 5-kinase, found in Shewanella amazonensis (strain ATCC BAA-1098 / SB2B).